We begin with the raw amino-acid sequence, 61 residues long: Bactridin-1 (61 aa).

The 61-residue stretch at 1–61 (KDGYIIEHRG…KIFDSNNLKC (61 aa)) folds into the LCN-type CS-alpha/beta domain. 4 cysteine pairs are disulfide-bonded: Cys-11-Cys-61, Cys-15-Cys-37, Cys-23-Cys-42, and Cys-27-Cys-44.

The protein belongs to the long (4 C-C) scorpion toxin superfamily. Sodium channel inhibitor family. Beta subfamily. As to expression, expressed by the venom gland.

It is found in the secreted. Functionally, shows antibacterial activity against both Gram-positive bacteria (B.subtilis, M.luteus, E.faecalis) and Gram-negative bacteria (P.aeruginosa, Y.enterocolitica, A.calcoaceticus). Modifies membrane sodium permeability on Y.enterocolitica. Is toxic to cockroaches and crabs, but is not toxic to mice. Does not induce haemolysis in human erythrocytes. Acts by inhibiting the sodium (Nav) currents. The protein is Bactridin-1 of Tityus discrepans (Venezuelan scorpion).